We begin with the raw amino-acid sequence, 66 residues long: uncharacterized protein (66 aa).

In terms of domain architecture, HTH cro/C1-type spans 5-59; that stretch reads LKYYRALHNLTQEDLAKKLGVSRQTIIAIEKGKYDPSLKLAFKIAKFFGVKIEDI. Positions 16–35 form a DNA-binding region, H-T-H motif; the sequence is QEDLAKKLGVSRQTIIAIEK.

This is an uncharacterized protein from Methanocaldococcus jannaschii (strain ATCC 43067 / DSM 2661 / JAL-1 / JCM 10045 / NBRC 100440) (Methanococcus jannaschii).